Here is a 321-residue protein sequence, read N- to C-terminus: Probable E3 ubiquitin-protein ligase BAH1-like 1 (321 aa).

Residues 1 to 149 (MKFAKKYEKY…YSKQGQEFKA (149 aa)) enclose the SPX domain. An RING-type zinc finger spans residues 217 to 266 (CSICLDTVFDPVALSCGHIYCYLCSCSAASVTIVDGLKSAERKSKCPLCR).

Belongs to the RING-type zinc finger family.

It catalyses the reaction S-ubiquitinyl-[E2 ubiquitin-conjugating enzyme]-L-cysteine + [acceptor protein]-L-lysine = [E2 ubiquitin-conjugating enzyme]-L-cysteine + N(6)-ubiquitinyl-[acceptor protein]-L-lysine.. Its pathway is protein modification; protein ubiquitination. The sequence is that of Probable E3 ubiquitin-protein ligase BAH1-like 1 from Oryza sativa subsp. indica (Rice).